The chain runs to 123 residues: Chondroitin proteoglycan 8 (123 aa).

The signal sequence occupies residues 1–16 (MRPFILLALLFSVAIA). The tract at residues 32–123 (SVRRSTRGAD…SGSGDEAPAE (92 aa)) is disordered. Basic and acidic residues predominate over residues 38 to 60 (RGADKKADSSDSSDSNEKDDKVT). O-linked (Xyl...) (chondroitin sulfate) serine glycosylation is found at serine 63 and serine 65. Positions 74–84 (EQLRRVARDVE) are enriched in basic and acidic residues. O-linked (Xyl...) (chondroitin sulfate) serine glycans are attached at residues serine 87, serine 93, and serine 114.

The polypeptide is Chondroitin proteoglycan 8 (cpg-8) (Caenorhabditis briggsae).